We begin with the raw amino-acid sequence, 399 residues long: Na(+)/H(+) antiporter NhaA (399 aa).

The next 11 helical transmembrane spans lie at 14-34 (AGGI…NSPL), 59-79 (LIHW…GLEV), 95-115 (SLPT…YLLF), 124-144 (AGWA…MALL), 154-174 (VFLL…IAMF), 177-197 (TDLS…LVGL), 213-233 (LILW…GVII), 261-281 (FIIL…PMSF), 290-310 (VGIA…FSYI), 331-351 (VALM…LAFV), and 363-383 (LGIL…LAKV).

Belongs to the NhaA Na(+)/H(+) (TC 2.A.33) antiporter family.

It is found in the cell inner membrane. The enzyme catalyses Na(+)(in) + 2 H(+)(out) = Na(+)(out) + 2 H(+)(in). Na(+)/H(+) antiporter that extrudes sodium in exchange for external protons. This Shewanella sediminis (strain HAW-EB3) protein is Na(+)/H(+) antiporter NhaA.